A 367-amino-acid polypeptide reads, in one-letter code: Glutamate 5-kinase (367 aa).

K17 is a binding site for ATP. 3 residues coordinate substrate: S57, D144, and N156. ATP contacts are provided by residues 176 to 177 and 217 to 223; these read SD and TGGMTSK. Positions 279–357 constitute a PUA domain; it reads AGALTLDEGA…SELPGELRRP (79 aa).

This sequence belongs to the glutamate 5-kinase family.

It is found in the cytoplasm. It catalyses the reaction L-glutamate + ATP = L-glutamyl 5-phosphate + ADP. Its pathway is amino-acid biosynthesis; L-proline biosynthesis; L-glutamate 5-semialdehyde from L-glutamate: step 1/2. Functionally, catalyzes the transfer of a phosphate group to glutamate to form L-glutamate 5-phosphate. This is Glutamate 5-kinase from Mycolicibacterium paratuberculosis (strain ATCC BAA-968 / K-10) (Mycobacterium paratuberculosis).